We begin with the raw amino-acid sequence, 1318 residues long: MSGGASATGPRRGPPGLEDTTSKKKQKDRANQESKDGDPRKETGSRYVAQAGLEPLASGDPSASASHAAGITGSRHRTRLFFPSSSGSASTPQEEQTKEGACEDPHDLLATPTPELLLDWRQSAEEVIVKLRVGVGPLQLEDVDAAFTDTDCVVRFAGGQQWGGVFYAEIKSSCAKVQTRKGSLLHLTLPKKVPMLTWPSLLVEADEQLCIPPLNSQTCLLGSEENLAPLAGEKAVPPGNDPVSPAMVRSRNPGKDDCAKEEMAVAADAATLVDEPESMVNLAFVKNDSYEKGPDSVVVHVYVKEICRDTSRVLFREQDFTLIFQTRDGNFLRLHPGCGPHTTFRWQVKLRNLIEPEQCTFCFTASRIDICLRKRQSQRWGGLEAPAARVGGAKVAVPTGPTPLDSTPPGGAPHPLTGQEEARAVEKDKSKARSEDTGLDSVATRTPMEHVTPKPETHLASPKPTCMVPPMPHSPVSGDSVEEEEEEEKKVCLPGFTGLVNLGNTCFMNSVIQSLSNTRELRDFFHDRSFEAEINYNNPLGTGGRLAIGFAVLLRALWKGTHHAFQPSKLKAIVASKASQFTGYAQHDAQEFMAFLLDGLHEDLNRIQNKPYTETVDSDGRPDEVVAEEAWQRHKMRNDSFIVDLFQGQYKSKLVCPVCAKVSITFDPFLYLPVPLPQKQKVLPVFYFAREPHSKPIKFLVSVSKENSTASEVLDSLSQSVHVKPENLRLAEVIKNRFHRVFLPSHSLDTVSPSDTLLCFELLSSELAKERVVVLEVQQRPQVPSVPISKCAACQRKQQSEDEKLKRCTRCYRVGYCNQLCQKTHWPDHKGLCRPENIGYPFLVSVPASRLTYARLAQLLEGYARYSVSVFQPPFQPGRMALESQSPGCTTLLSTGSLEAGDSERDPIQPPELQLVTPMAEGDTGLPRVWAAPDRGPVPSTSGISSEMLASGPIEVGSLPAGERVSRPEAAVPGYQHPSEAMNAHTPQFFIYKIDSSNREQRLEDKGDTPLELGDDCSLALVWRNNERLQEFVLVASKELECAEDPGSAGEAARAGHFTLDQCLNLFTRPEVLAPEEAWYCPQCKQHREASKQLLLWRLPNVLIVQLKRFSFRSFIWRDKINDLVEFPVRNLDLSKFCIGQKEEQLPSYDLYAVINHYGGMIGGHYTACARLPNDRSSQRSDVGWRLFDDSTVTTVDESQVVTRYAYVLFYRRRNSPVERPPRAGHSEHHPDLGPAAEAAASQASRIWQELEAEEEPVPEGSGPLGPWGPQDWVGPLPRGPTTPDEGCLRYFVLGTVAALVALVLNVFYPLVSQSRWR.

Positions 1–109 are disordered; the sequence is MSGGASATGP…GACEDPHDLL (109 aa). Topologically, residues 1–1291 are cytoplasmic; sequence MSGGASATGP…TTPDEGCLRY (1291 aa). Residues 28–44 are compositionally biased toward basic and acidic residues; the sequence is DRANQESKDGDPRKETG. The segment covering 83 to 94 has biased composition (polar residues); it reads PSSSGSASTPQE. The segment covering 95-107 has biased composition (basic and acidic residues); sequence EQTKEGACEDPHD. Positions 113-202 constitute a CS 1 domain; the sequence is TPELLLDWRQ…VPMLTWPSLL (90 aa). The disordered stretch occupies residues 234-255; that stretch reads KAVPPGNDPVSPAMVRSRNPGK. The residue at position 244 (Ser-244) is a Phosphoserine. The 103-residue stretch at 282–384 folds into the CS 2 domain; the sequence is LAFVKNDSYE…RQSQRWGGLE (103 aa). Residues 390–479 are disordered; it reads VGGAKVAVPT…PMPHSPVSGD (90 aa). Composition is skewed to basic and acidic residues over residues 420–436 and 447–457; these read EEARAVEKDKSKARSED and PMEHVTPKPET. Residues 497 to 1214 form the USP domain; it reads TGLVNLGNTC…YAYVLFYRRR (718 aa). Cys-506 (nucleophile) is an active-site residue. Residues Cys-791, Cys-794, Cys-808, Cys-811, Cys-817, Cys-821, His-829, and Cys-833 each contribute to the Zn(2+) site. The segment at 791 to 833 adopts an MYND-type zinc-finger fold; the sequence is CAACQRKQQSEDEKLKRCTRCYRVGYCNQLCQKTHWPDHKGLC. His-1165 serves as the catalytic Proton acceptor. Over residues 1218 to 1232 the composition is skewed to basic and acidic residues; that stretch reads VERPPRAGHSEHHPD. The disordered stretch occupies residues 1218-1239; it reads VERPPRAGHSEHHPDLGPAAEA. The chain crosses the membrane as a helical span at residues 1292–1312; that stretch reads FVLGTVAALVALVLNVFYPLV. At 1313–1318 the chain is on the lumenal side; the sequence is SQSRWR.

The protein belongs to the peptidase C19 family. Interacts with RNF123. Interacts with BIRC2/c-IAP1, BIRC3/c-IAP2 and XIAP/BIRC4. Interacts with HIF1A (via N-terminus). Interacts (via N-terminus) with HSP90AA1; this interaction activates the deubiquitinase activity of USP19.

The protein localises to the endoplasmic reticulum membrane. It carries out the reaction Thiol-dependent hydrolysis of ester, thioester, amide, peptide and isopeptide bonds formed by the C-terminal Gly of ubiquitin (a 76-residue protein attached to proteins as an intracellular targeting signal).. In terms of biological role, deubiquitinating enzyme that regulates the degradation of various proteins by removing ubiquitin moieties, thereby preventing their proteasomal degradation. Stabilizes RNF123, which promotes CDKN1B degradation and contributes to cell proliferation. Decreases the levels of ubiquitinated proteins during skeletal muscle formation and acts to repress myogenesis. Modulates transcription of major myofibrillar proteins. Also involved in turnover of endoplasmic-reticulum-associated degradation (ERAD) substrates. Mechanistically, deubiquitinates and thereby stabilizes several E3 ligases involved in the ERAD pathway including SYVN1 or MARCHF6. Regulates the stability of other E3 ligases including BIRC2/c-IAP1 and BIRC3/c-IAP2 by preventing their ubiquitination. Required for cells to mount an appropriate response to hypoxia by rescuing HIF1A from degradation in a non-catalytic manner and by mediating the deubiquitination of FUNDC1. Attenuates mitochondrial damage and ferroptosis by targeting and stabilizing NADPH oxidase 4/NOX4. Negatively regulates TNF-alpha- and IL-1beta-triggered NF-kappa-B activation by hydrolyzing 'Lys-27'- and 'Lys-63'-linked polyubiquitin chains from MAP3K7. Modulates also the protein level and aggregation of polyQ-expanded huntingtin/HTT through HSP90AA1. The chain is Ubiquitin carboxyl-terminal hydrolase 19 (USP19) from Homo sapiens (Human).